Reading from the N-terminus, the 493-residue chain is ATP synthase subunit beta, chloroplastic (493 aa).

Residue 170–177 coordinates ATP; the sequence is GGAGVGKT.

This sequence belongs to the ATPase alpha/beta chains family. F-type ATPases have 2 components, CF(1) - the catalytic core - and CF(0) - the membrane proton channel. CF(1) has five subunits: alpha(3), beta(3), gamma(1), delta(1), epsilon(1). CF(0) has four main subunits: a(1), b(1), b'(1) and c(9-12).

It is found in the plastid. The protein localises to the chloroplast thylakoid membrane. It catalyses the reaction ATP + H2O + 4 H(+)(in) = ADP + phosphate + 5 H(+)(out). Its function is as follows. Produces ATP from ADP in the presence of a proton gradient across the membrane. The catalytic sites are hosted primarily by the beta subunits. The sequence is that of ATP synthase subunit beta, chloroplastic from Staurastrum punctulatum (Green alga).